A 1473-amino-acid polypeptide reads, in one-letter code: Sulfite reductase [NADPH] subunit beta (1473 aa).

Residues 728–876 form the Flavodoxin-like domain; the sequence is LTILFASDGG…AYNLWEPELW (149 aa). Cys-1328, Cys-1334, Cys-1373, and Cys-1377 together coordinate [4Fe-4S] cluster. Siroheme is bound at residue Cys-1377.

It belongs to the nitrite and sulfite reductase 4Fe-4S domain family. In terms of assembly, alpha(2)-beta(2). The alpha component is a flavoprotein, the beta component is a hemoprotein. Siroheme serves as cofactor. The cofactor is [4Fe-4S] cluster.

Its subcellular location is the cytoplasm. It carries out the reaction hydrogen sulfide + 3 NADP(+) + 3 H2O = sulfite + 3 NADPH + 4 H(+). The protein operates within sulfur metabolism; hydrogen sulfide biosynthesis; hydrogen sulfide from sulfite (NADPH route): step 1/1. Catalyzes the reduction of sulfite to sulfide, one of several activities required for the biosynthesis of L-cysteine from sulfate. This is Sulfite reductase [NADPH] subunit beta (sir1) from Schizosaccharomyces pombe (strain 972 / ATCC 24843) (Fission yeast).